The chain runs to 330 residues: Zinc finger Ran-binding domain-containing protein 2 (330 aa).

Ser9 bears the Phosphoserine mark. The segment at 9 to 40 adopts a RanBP2-type 1 zinc-finger fold; the sequence is SDGDWICPDKKCGNVNFARRTSCNRCGREKTT. An N6-acetyllysine mark is found at Lys18, Lys54, and Lys92. The segment at 65–94 adopts a RanBP2-type 2 zinc-finger fold; the sequence is SANDWQCKTCSNVNWARRSECNMCNTPKYA. Residues 117–330 form a disordered region; it reads REESDGEYDE…SGSRSSSKKK (214 aa). Residues Ser120, Ser153, Ser181, Ser188, and Ser193 each carry the phosphoserine modification. Acidic residues predominate over residues 150–163; that stretch reads DKESEGEEEDEDED. Positions 151–324 are required for nuclear targeting; that stretch reads KESEGEEEDE…SSGSTHSGSR (174 aa). The span at 196–210 shows a compositional bias: basic residues; it reads KKSNRRSRSKSRSSH. 2 stretches are compositionally biased toward low complexity: residues 211-224 and 232-242; these read SRSSSRSSSPSSSR and RSSSSSQSRSH. Composition is skewed to basic residues over residues 251 to 273 and 297 to 314; these read SRGSKSRSSSRSHRGSSSPRKRS and VRKKRRTRSRSPERHHRS. Over residues 315–330 the composition is skewed to low complexity; that stretch reads SSGSTHSGSRSSSKKK.

This sequence belongs to the ZRANB2 family. Interacts with the C-terminal half of SNRNP70, the Arg/Ser-rich domain of AKAP17A as well as with U2AF1 and CLK1.

The protein resides in the nucleus. Its function is as follows. Splice factor required for alternative splicing of TRA2B/SFRS10 transcripts. Binds to ssRNA containing the consensus sequence 5'-AGGUAA-3'. May interfere with constitutive 5'-splice site selection. This is Zinc finger Ran-binding domain-containing protein 2 (Zranb2) from Mus musculus (Mouse).